Here is a 171-residue protein sequence, read N- to C-terminus: Co-chaperone protein HscB (171 aa).

In terms of domain architecture, J spans 2 to 74 (DYFTLFGLPA…LMRAEYLLSL (73 aa)).

This sequence belongs to the HscB family. In terms of assembly, interacts with HscA and stimulates its ATPase activity. Interacts with IscU.

Functionally, co-chaperone involved in the maturation of iron-sulfur cluster-containing proteins. Seems to help targeting proteins to be folded toward HscA. This Escherichia coli (strain SMS-3-5 / SECEC) protein is Co-chaperone protein HscB.